Reading from the N-terminus, the 60-residue chain is uncharacterized protein (60 aa).

The helical transmembrane segment at 33–55 (FRLLRGIFLITLVIWTVVWLKLL) threads the bilayer.

Belongs to the HHV-5 UL2 protein family.

It is found in the host membrane. This is an uncharacterized protein from Human cytomegalovirus (strain AD169) (HHV-5).